The primary structure comprises 142 residues: Large ribosomal subunit protein bL17 (142 aa).

This sequence belongs to the bacterial ribosomal protein bL17 family. As to quaternary structure, part of the 50S ribosomal subunit. Contacts protein L32.

In Rickettsia bellii (strain OSU 85-389), this protein is Large ribosomal subunit protein bL17.